Reading from the N-terminus, the 232-residue chain is Homeobox protein Rhox13 (232 aa).

The interval 45–114 (QAAVASSHDS…EAAAPSVAAV (70 aa)) is disordered. Residues 68–105 (SDSESESDSESESDSSDSSDESDDDSSTSDEDTSDPEE) show a composition bias toward acidic residues. A DNA-binding region (homeobox) is located at residues 148 to 207 (RRGPPFHFAQWQVEEMESLFEETQYPDLLTRGELARTLNVPEVKVKVWFTNRRAKQRKIE).

Belongs to the paired-like homeobox family.

Its subcellular location is the nucleus. Functionally, probable transcription factor. The protein is Homeobox protein Rhox13 of Mus musculus (Mouse).